The primary structure comprises 460 residues: Bifunctional protein GlmU (460 aa).

Positions 1–235 (MALSAAIILA…PLSVEGVNDR (235 aa)) are pyrophosphorylase. UDP-N-acetyl-alpha-D-glucosamine-binding positions include 9 to 12 (LAAG), Lys23, Gln76, and 81 to 82 (GT). Residue Asp109 coordinates Mg(2+). UDP-N-acetyl-alpha-D-glucosamine-binding residues include Gly146, Glu161, Asn176, and Asn233. Asn233 contributes to the Mg(2+) binding site. A linker region spans residues 236–256 (VQLAALAKAHNKRVCEHWMRE). The segment at 257-460 (GVTILDPDTT…VEGWKPEWER (204 aa)) is N-acetyltransferase. The UDP-N-acetyl-alpha-D-glucosamine site is built by Arg338 and Lys356. His368 acts as the Proton acceptor in catalysis. UDP-N-acetyl-alpha-D-glucosamine contacts are provided by Tyr371 and Asn382. Acetyl-CoA-binding positions include 391–392 (NY) and Ala428.

It in the N-terminal section; belongs to the N-acetylglucosamine-1-phosphate uridyltransferase family. The protein in the C-terminal section; belongs to the transferase hexapeptide repeat family. In terms of assembly, homotrimer. Mg(2+) serves as cofactor.

Its subcellular location is the cytoplasm. It catalyses the reaction alpha-D-glucosamine 1-phosphate + acetyl-CoA = N-acetyl-alpha-D-glucosamine 1-phosphate + CoA + H(+). The enzyme catalyses N-acetyl-alpha-D-glucosamine 1-phosphate + UTP + H(+) = UDP-N-acetyl-alpha-D-glucosamine + diphosphate. The protein operates within nucleotide-sugar biosynthesis; UDP-N-acetyl-alpha-D-glucosamine biosynthesis; N-acetyl-alpha-D-glucosamine 1-phosphate from alpha-D-glucosamine 6-phosphate (route II): step 2/2. Its pathway is nucleotide-sugar biosynthesis; UDP-N-acetyl-alpha-D-glucosamine biosynthesis; UDP-N-acetyl-alpha-D-glucosamine from N-acetyl-alpha-D-glucosamine 1-phosphate: step 1/1. It functions in the pathway bacterial outer membrane biogenesis; LPS lipid A biosynthesis. Functionally, catalyzes the last two sequential reactions in the de novo biosynthetic pathway for UDP-N-acetylglucosamine (UDP-GlcNAc). The C-terminal domain catalyzes the transfer of acetyl group from acetyl coenzyme A to glucosamine-1-phosphate (GlcN-1-P) to produce N-acetylglucosamine-1-phosphate (GlcNAc-1-P), which is converted into UDP-GlcNAc by the transfer of uridine 5-monophosphate (from uridine 5-triphosphate), a reaction catalyzed by the N-terminal domain. This chain is Bifunctional protein GlmU, found in Bifidobacterium adolescentis (strain ATCC 15703 / DSM 20083 / NCTC 11814 / E194a).